Here is a 519-residue protein sequence, read N- to C-terminus: Signal transduction histidine-protein kinase/phosphatase MprB (519 aa).

Residues 1 to 26 lie on the Cytoplasmic side of the membrane; it reads MVRFAWRRRASLRATSSLSLRWRVML. The helical transmembrane segment at 27–47 threads the bilayer; the sequence is LAMSMVAMVVVLMAFAVYVVI. Residues 48–163 lie on the Extracellular side of the membrane; that stretch reads SAALYSDIDN…PTEAVMTKLR (116 aa). A helical transmembrane segment spans residues 164-184; the sequence is WVLLIVGSLGVAVAAVAGGMV. Over 185 to 519 the chain is Cytoplasmic; the sequence is TRAGLRPVGR…SVDYQSARAR (335 aa). One can recognise an HAMP domain in the interval 186-238; sequence RAGLRPVGRLTEAAERVARTDDLRPIPVFGSDELARLTEAFNLMLRALAESRE. In terms of domain architecture, Histidine kinase spans 246–466; sequence DAGHELRTPL…SIYVLLPGRP (221 aa). Residue His249 is modified to Phosphohistidine; by autocatalysis.

Requires Mg(2+) as cofactor. The cofactor is Mn(2+). Autophosphorylated.

It localises to the cell membrane. It catalyses the reaction ATP + protein L-histidine = ADP + protein N-phospho-L-histidine.. In terms of biological role, member of the two-component regulatory system MprB/MprA which contributes to maintaining a balance among several systems involved in stress resistance and is required for establishment and maintenance of persistent infection in the host. In response to environmental signals MprB acts both as a membrane-associated protein kinase that undergoes autophosphorylation and subsequently transfers the phosphate to MprA, and a protein phosphatase that dephosphorylates phospho-MprA. The polypeptide is Signal transduction histidine-protein kinase/phosphatase MprB (mprB) (Mycobacterium leprae (strain TN)).